The chain runs to 171 residues: Co-chaperone protein HscB (171 aa).

One can recognise a J domain in the interval 2–74; that stretch reads DYFTLFGLPA…LMRAEYLLSL (73 aa).

It belongs to the HscB family. Interacts with HscA and stimulates its ATPase activity. Interacts with IscU.

In terms of biological role, co-chaperone involved in the maturation of iron-sulfur cluster-containing proteins. Seems to help targeting proteins to be folded toward HscA. This Shigella flexneri serotype 5b (strain 8401) protein is Co-chaperone protein HscB.